The following is a 521-amino-acid chain: Anaerobic nitric oxide reductase flavorubredoxin (521 aa).

Residues 30–210 (HKGTSYNSYL…PFSPLVTAKI (181 aa)) are zinc metallo-hydrolase. 6 residues coordinate Fe cation: histidine 79, glutamate 81, aspartate 83, histidine 147, aspartate 166, and histidine 227. The Flavodoxin-like domain occupies 254–393 (ITLFYDSMSN…LCREHGRQLA (140 aa)). Residues 260–264 (SMSNN) and 342–369 (AFGS…DISI) each bind FMN. The Rubredoxin-like domain occupies 464 to 515 (DQPMLCTVCQWIYDPALGEPDQLVAPGTPWARVPDSFLCPGCGIGKEVFEPC). 4 residues coordinate Fe cation: cysteine 469, cysteine 472, cysteine 502, and cysteine 505.

In the N-terminal section; belongs to the zinc metallo-hydrolase group 3 family. In terms of assembly, homotetramer. The cofactor is Fe cation. Requires FMN as cofactor.

The protein localises to the cytoplasm. It functions in the pathway nitrogen metabolism; nitric oxide reduction. In terms of biological role, anaerobic nitric oxide reductase; uses NADH to detoxify nitric oxide (NO), protecting several 4Fe-4S NO-sensitive enzymes. Has at least 2 reductase partners, only one of which (NorW, flavorubredoxin reductase) has been identified. NO probably binds to the di-iron center; electrons enter from the NorW at rubredoxin and are transferred sequentially to the FMN center and the di-iron center. Also able to function as an aerobic oxygen reductase. This chain is Anaerobic nitric oxide reductase flavorubredoxin, found in Aeromonas salmonicida (strain A449).